Consider the following 239-residue polypeptide: MSREEDEKLLFPSFAFPAECFPEAATSGGEQKKARQRRRRKVKPEAAAALAGESGGDEQAKKRRLSDEQARFLEMSFKKERKLETPRKVQLAAELGLDAKQVAVWFQNRRARHKSKLMEEEFAKLRSAHDAVVLQNCHLETELLKLKERLADVEEEKAKLAAVAAATTGGGGGGGGGSSSPTSSSFSTVTYHPALAGQFGVEAAAEEADLTYMSEYAYNSYMLELAAAGYCGGVYDQFS.

The tract at residues 25 to 65 is disordered; it reads ATSGGEQKKARQRRRRKVKPEAAAALAGESGGDEQAKKRRL. Residues 58–117 constitute a DNA-binding region (homeobox); that stretch reads EQAKKRRLSDEQARFLEMSFKKERKLETPRKVQLAAELGLDAKQVAVWFQNRRARHKSKL. The stretch at 107 to 168 forms a coiled coil; that stretch reads QNRRARHKSK…KLAAVAAATT (62 aa).

It belongs to the HD-ZIP homeobox family. Class I subfamily. In terms of tissue distribution, expressed in seedlings, roots, stems, leaf sheaths and panicles.

The protein resides in the nucleus. Functionally, probable transcription factor. The polypeptide is Homeobox-leucine zipper protein HOX12 (HOX12) (Oryza sativa subsp. japonica (Rice)).